Here is a 470-residue protein sequence, read N- to C-terminus: ATP synthase subunit beta (470 aa).

Residue 155-162 (GGAGVGKT) coordinates ATP.

Belongs to the ATPase alpha/beta chains family. In terms of assembly, F-type ATPases have 2 components, CF(1) - the catalytic core - and CF(0) - the membrane proton channel. CF(1) has five subunits: alpha(3), beta(3), gamma(1), delta(1), epsilon(1). CF(0) has three main subunits: a(1), b(2) and c(9-12). The alpha and beta chains form an alternating ring which encloses part of the gamma chain. CF(1) is attached to CF(0) by a central stalk formed by the gamma and epsilon chains, while a peripheral stalk is formed by the delta and b chains.

The protein resides in the cell membrane. It carries out the reaction ATP + H2O + 4 H(+)(in) = ADP + phosphate + 5 H(+)(out). Its function is as follows. Produces ATP from ADP in the presence of a proton gradient across the membrane. The catalytic sites are hosted primarily by the beta subunits. This Staphylococcus saprophyticus subsp. saprophyticus (strain ATCC 15305 / DSM 20229 / NCIMB 8711 / NCTC 7292 / S-41) protein is ATP synthase subunit beta.